The sequence spans 428 residues: Stabilizer of axonemal microtubules 4 (428 aa).

A disordered region spans residues 201 to 231 (AKEETGFTEESNKNPIVFQPPSQALPGDPVL).

Microtubule inner protein component of sperm flagellar doublet microtubules. Interacts with PPP1CA.

The protein resides in the cell projection. It localises to the cilium. The protein localises to the cytoplasm. Its subcellular location is the cytoskeleton. It is found in the flagellum axoneme. This is Stabilizer of axonemal microtubules 4 from Bos taurus (Bovine).